The following is a 393-amino-acid chain: MSSVPYNSQLPISNHLEYDEDEKKSRGSKLGLKYKMIYWRKTLCSSLARWRKLILLISLALFLFIWISDSTISRNPSTTSFQGQNSNDNKLSNTGSSINSKRYVPPYSKRSRWSFWNQDPRIVIILAANEGGGVLRWKNEQEWAIEGISIENKKAYAKRHGYALTIKDLTTSKRYSHEYREGWQKVDILRQTFREFPNAEWFWWLDLDTMIMEPSKSLEEHIFDRLETLADRELKSFNPLNLRDDIPYVDYSEEMEFLITQDCGGFNLGSFLIKNSEWSKLLLDMWWDPVLYEQKHMVWEHREQDALEALYENEPWIRSRIGFLPLRTINAFPPGACSEYSGDSRYFYSEKDHDFVVNMAGCNFGRDCWGEMQYYTTLMEKLNRKWYTRFFFP.

At 1–52 (MSSVPYNSQLPISNHLEYDEDEKKSRGSKLGLKYKMIYWRKTLCSSLARWRK) the chain is on the cytoplasmic side. Residues 53–73 (LILLISLALFLFIWISDSTIS) form a helical; Signal-anchor for type II membrane protein membrane-spanning segment. At 74–393 (RNPSTTSFQG…RKWYTRFFFP (320 aa)) the chain is on the lumenal side. The disordered stretch occupies residues 77 to 97 (STTSFQGQNSNDNKLSNTGSS).

This sequence belongs to the glycosyltransferase 34 family. Component of the M-Pol II complex composed of ANP1, MNN9, MNN10, MNN11 and HOC1.

The protein resides in the endoplasmic reticulum membrane. It is found in the golgi apparatus. It localises to the cis-Golgi network membrane. In terms of biological role, required for polarized growth and efficient budding. The M-Pol II complex possesses alpha-1,6-mannosyltransferase activity and is probably involved in the elongation of the mannan backbone of N-linked glycans on cell wall and periplasmic proteins. In Saccharomyces cerevisiae (strain ATCC 204508 / S288c) (Baker's yeast), this protein is Probable alpha-1,6-mannosyltransferase MNN10 (MNN10).